We begin with the raw amino-acid sequence, 261 residues long: Recombination protein bet (261 aa).

Functionally, gene bet protein functions in general recombination and in the late, rolling-circle mode of lambda DNA replication. Has a function similar to that of E.coli recT. It is a single-stranded DNA binding protein that can promote renaturation of DNA. The protein is Recombination protein bet (bet) of Escherichia coli (Bacteriophage lambda).